A 210-amino-acid chain; its full sequence is Cytochrome c biogenesis ATP-binding export protein CcmA (210 aa).

The ABC transporter domain occupies 3–205 (LHLQAAGLAC…KPSGYRELNL (203 aa)). Position 37–44 (37–44 (GPNGSGKT)) interacts with ATP.

Belongs to the ABC transporter superfamily. CcmA exporter (TC 3.A.1.107) family. As to quaternary structure, the complex is composed of two ATP-binding proteins (CcmA) and two transmembrane proteins (CcmB).

The protein localises to the cell inner membrane. It carries out the reaction heme b(in) + ATP + H2O = heme b(out) + ADP + phosphate + H(+). Its function is as follows. Part of the ABC transporter complex CcmAB involved in the biogenesis of c-type cytochromes; once thought to export heme, this seems not to be the case, but its exact role is uncertain. Responsible for energy coupling to the transport system. This Pseudomonas putida (strain ATCC 47054 / DSM 6125 / CFBP 8728 / NCIMB 11950 / KT2440) protein is Cytochrome c biogenesis ATP-binding export protein CcmA.